The primary structure comprises 396 residues: Elongation factor Tu 2 (396 aa).

One can recognise a tr-type G domain in the interval 10–206 (KPHVNVGTIG…ALDTYIPTPE (197 aa)). Positions 19–26 (GHVDHGKT) are G1. A GTP-binding site is contributed by 19-26 (GHVDHGKT). Residue threonine 26 coordinates Mg(2+). The segment at 60 to 64 (GITIN) is G2. The tract at residues 81–84 (DCPG) is G3. Residues 81–85 (DCPGH) and 136–139 (NKAD) contribute to the GTP site. The interval 136 to 139 (NKAD) is G4. Residues 174 to 176 (SAK) form a G5 region.

It belongs to the TRAFAC class translation factor GTPase superfamily. Classic translation factor GTPase family. EF-Tu/EF-1A subfamily. Monomer.

Its subcellular location is the cytoplasm. The catalysed reaction is GTP + H2O = GDP + phosphate + H(+). Its function is as follows. GTP hydrolase that promotes the GTP-dependent binding of aminoacyl-tRNA to the A-site of ribosomes during protein biosynthesis. The chain is Elongation factor Tu 2 from Methylobacillus flagellatus (strain ATCC 51484 / DSM 6875 / VKM B-1610 / KT).